The primary structure comprises 172 residues: Avenin-like a4 (172 aa).

Positions 1-19 (MKTMFILALIALAATSVVA) are cleaved as a signal peptide.

The protein belongs to the prolamin family. Post-translationally, contains 7 disulfide bonds.

Seed storage protein. Not integrated in the gluten polymer through disulfide bonds, unless incorporated by reduction and reoxidation during dough making. Increases dough strength and bread volume, but decreases dough stability when added into a base wheat flour. This is Avenin-like a4 from Triticum aestivum (Wheat).